A 555-amino-acid chain; its full sequence is MAAAVSLWPRTEPLLLGALPVPPPARLGPHYLRKMAAYARARAAEGCYPRLSWPRWRHIACGKLQLGRGLAWLYFERFHDLLPPPDPPRRLQRAEAEAACGSAEELERERGKLSVDTLRFLLFLYLQQLNKASLRTSLIGEEWPSHRARAAGLPGRAAGQSKNWNDQDHLAFLLTHLSDMLELLLEPEQLGASSHATHNSLVSYEAVCALSFLIEGTVNNSRTIHPLHELALWQPCHGQNGYSKISKTFSFPKLENWLRSCLIINPFGMTACLRSGKKLAWAQQVEGTTRRAKIACNTRVVPEVSPMVIMSQVYKQTLAKSSDTLVGAHVRIHRCNESFIYLLSPLCSVTIEKCRNSTFVLGPVEASVHVHSCDNIKVITVCHCLSLSSTTGCTFHILTPTQPLILAGNQAISFAPFHTHYPMLEDHMAQVGLATVPNYWDSPMMVCKEGSDASVFRLLSPLDFYTFVIPFEMEGDTTETPGGLPHAYQKALNQREQKVQIWQKMVKEACLTKDQRKQFQMLVESKFYEWLIQTGNRQQLDSLVPPAVGSKQAAG.

Residues 302–433 (PEVSPMVIMS…LEDHMAQVGL (132 aa)) form the C-CAP/cofactor C-like domain.

The protein belongs to the TBCC family.

It is found in the cytoplasm. The protein localises to the cytoskeleton. It localises to the microtubule organizing center. The protein resides in the centrosome. Its subcellular location is the spindle pole. Functionally, may play a role in the regulation of centrosome and Golgi apparatus positioning. The sequence is that of TBCC domain-containing protein 1 (TBCCD1) from Gallus gallus (Chicken).